The sequence spans 54 residues: Large ribosomal subunit protein bL33B (54 aa).

This sequence belongs to the bacterial ribosomal protein bL33 family.

This Mycobacterium sp. (strain JLS) protein is Large ribosomal subunit protein bL33B.